The following is a 354-amino-acid chain: Peptide chain release factor 1 (354 aa).

Q230 bears the N5-methylglutamine mark.

It belongs to the prokaryotic/mitochondrial release factor family. In terms of processing, methylated by PrmC. Methylation increases the termination efficiency of RF1.

It localises to the cytoplasm. Its function is as follows. Peptide chain release factor 1 directs the termination of translation in response to the peptide chain termination codons UAG and UAA. This is Peptide chain release factor 1 from Rhodospirillum rubrum (strain ATCC 11170 / ATH 1.1.1 / DSM 467 / LMG 4362 / NCIMB 8255 / S1).